Here is a 428-residue protein sequence, read N- to C-terminus: MNYTETVAYIHSFPRLAKTGDHRRILTLLHALGNPQQQGRYIHVTGTNGKGSAANAIAHVLEASGLTVGLYTSPFIMRFNERIMIDHEPIPDAALVNAVAFVRAALERLQQQQADFNVTEFEFITALGYWYFRQRQVDVAVIEVGIGGDTDSTNVITPVVSVLTEVALDHQKLLGHTITAIAKHKAGIIKRGIPVVTGNLVPDAAAVVAAKVATTGSQWLRFDRDFSVPKAKLHGWGQRFTYEDQDGRISDLEVPLVGDYQQRNMAIAIQTAKVYAKQTEWPLTPQNIRQGLAASHWPARLEKISDTPLIVIDGAHNPDGINGLITALKQLFSQPITVIAGILADKDYAAMADRLTAAFSTVYLVPVPGTPRALPEAGYEALHEGRLKDSWQEALAASLNDVPDQPIVITGSLYLASAVRQTLLGGKS.

49–52 (GKGS) is a binding site for ATP. Residue serine 73 participates in Mg(2+) binding. (6R)-5,10-methylenetetrahydrofolyl-(gamma-L-Glu)n-binding residues include phenylalanine 75 and arginine 82. Mg(2+)-binding residues include glutamate 143 and histidine 170. Lysine 185 is modified (N6-carboxylysine). Residues asparagine 264, arginine 300, and 313 to 316 (DGAH) each bind ATP. (6R)-5,10-methylenetetrahydrofolyl-(gamma-L-Glu)n is bound at residue serine 417.

It belongs to the folylpolyglutamate synthase family. In terms of assembly, monomer. Requires Mg(2+) as cofactor.

The enzyme catalyses (6S)-5,6,7,8-tetrahydrofolyl-(gamma-L-Glu)(n) + L-glutamate + ATP = (6S)-5,6,7,8-tetrahydrofolyl-(gamma-L-Glu)(n+1) + ADP + phosphate + H(+). It carries out the reaction (6R)-5,10-methylenetetrahydrofolyl-(gamma-L-Glu)(n) + L-glutamate + ATP = (6R)-5,10-methylenetetrahydrofolyl-(gamma-L-Glu)(n+1) + ADP + phosphate + H(+). The catalysed reaction is 10-formyltetrahydrofolyl-(gamma-L-Glu)(n) + L-glutamate + ATP = 10-formyltetrahydrofolyl-(gamma-L-Glu)(n+1) + ADP + phosphate + H(+). Its activity is regulated as follows. Competitively inhibited by adenosine 5'-(3-thio)triphosphate and beta,gamma-methylene-ATP. Involved in the conversion of folates to polyglutamate derivatives, and likely functions in the retention of cellular folate pools. Catalyzes successive MgATP-dependent additions of glutamate to a pteroylmonoglutamate substrate, with a high preference for 5,10-methylenetetrahydrofolate (mTHF). Thus, metabolizes mTHF to the tetraglutamate derivative, but longer glutamate chain length products are not observed. Tetrahydrofolate (H4PteGlu) and 10-formyl-H4PteGlu are poorer folate substrates. In contrast to E.coli FolC, this enzyme does not display dihydrofolate synthase activity. The protein is Folylpolyglutamate synthase of Lacticaseibacillus casei (Lactobacillus casei).